Reading from the N-terminus, the 154-residue chain is UPF0039 protein sll0451 (154 aa).

The 144-residue stretch at 8–151 folds into the N-acetyltransferase domain; it reads QRFNDISGEA…EHISMIFRVP (144 aa).

It belongs to the UPF0039 (ElaA) family.

This chain is UPF0039 protein sll0451, found in Synechocystis sp. (strain ATCC 27184 / PCC 6803 / Kazusa).